Here is a 942-residue protein sequence, read N- to C-terminus: Protein FAM184B (942 aa).

Disordered stretches follow at residues 1–26 (MASA…RGGS) and 73–97 (QEDL…TSED). Coiled-coil stretches lie at residues 89-150 (QEQS…RVLI), 196-337 (EMHQ…DRLM), and 387-495 (SETQ…SLLE). A disordered region spans residues 486-542 (STKLQNSLLEDPCSRPKKPARDEGLEKLTDEEESSSDEEERTGESVKGKSDLQPPFE). Residues 504–513 (PARDEGLEKL) show a composition bias toward basic and acidic residues. Residues 514–526 (TDEEESSSDEEER) are compositionally biased toward acidic residues. Coiled-coil stretches lie at residues 575–619 (NKDS…ESLR) and 686–815 (EKGL…ERRF). Residues 880-934 (APPITKSPSLDPSPSCSQPYKPTQLLDGKTASRTQDGEPAQPKEAPQKQGSPHQE) are disordered. Residues 885-900 (KSPSLDPSPSCSQPYK) show a composition bias toward polar residues.

This sequence belongs to the FAM184 family.

The protein is Protein FAM184B (Fam184b) of Mus musculus (Mouse).